Here is a 519-residue protein sequence, read N- to C-terminus: tRNA-2-methylthio-N(6)-dimethylallyladenosine synthase (519 aa).

Positions 1 to 23 (MNEQQRKQQSQIRTEQANVDRIK) are disordered. Residues 7 to 17 (KQQSQIRTEQA) are compositionally biased toward polar residues. The region spanning 76–194 (KKFLIRTYGC…LPHLVKEALF (119 aa)) is the MTTase N-terminal domain. Positions 85, 121, 155, 231, 235, and 238 each coordinate [4Fe-4S] cluster. A Radical SAM core domain is found at 217–450 (RKGKIKAWVN…VNKQSAASMK (234 aa)). The region spanning 450 to 513 (KDYAGKKVKV…TWSLNGVMVE (64 aa)) is the TRAM domain.

Belongs to the methylthiotransferase family. MiaB subfamily. As to quaternary structure, monomer. It depends on [4Fe-4S] cluster as a cofactor.

It is found in the cytoplasm. The catalysed reaction is N(6)-dimethylallyladenosine(37) in tRNA + (sulfur carrier)-SH + AH2 + 2 S-adenosyl-L-methionine = 2-methylsulfanyl-N(6)-dimethylallyladenosine(37) in tRNA + (sulfur carrier)-H + 5'-deoxyadenosine + L-methionine + A + S-adenosyl-L-homocysteine + 2 H(+). In terms of biological role, catalyzes the methylthiolation of N6-(dimethylallyl)adenosine (i(6)A), leading to the formation of 2-methylthio-N6-(dimethylallyl)adenosine (ms(2)i(6)A) at position 37 in tRNAs that read codons beginning with uridine. This is tRNA-2-methylthio-N(6)-dimethylallyladenosine synthase from Oceanobacillus iheyensis (strain DSM 14371 / CIP 107618 / JCM 11309 / KCTC 3954 / HTE831).